Reading from the N-terminus, the 534-residue chain is Calcium-dependent protein kinase 18 (534 aa).

Positions 1-49 (MGLCFSSPKATRRGTGSRNPNPDSPTQGKASEKVSNKNKKNTKKIQLRH) are disordered. G2 carries N-myristoyl glycine lipidation. The span at 14–29 (GTGSRNPNPDSPTQGK) shows a compositional bias: polar residues. Residues 36-47 (NKNKKNTKKIQL) are compositionally biased toward basic residues. The Protein kinase domain maps to 71 to 331 (YTIGKLLGHG…AAQALSHSWV (261 aa)). ATP is bound by residues 77–85 (LGHGQFGFT) and K100. The active-site Proton acceptor is D197. S237 bears the Phosphoserine mark. The interval 337 to 367 (ASEVPIDISVLNNMRQFVKFSRLKQIALRAL) is autoinhibitory domain. EF-hand domains lie at 374-409 (DELD…DVPW), 411-446 (LKDA…VNQL), 453-488 (KWQQ…KGSI), and 491-518 (LLEE…ASLK). Residues D387, D389, N391, S393, E398, D424, N426, D428, E435, D466, D468, D470, E477, D496, D498, D500, and R502 each contribute to the Ca(2+) site. Phosphoserine is present on S504. Residue E507 coordinates Ca(2+).

It belongs to the protein kinase superfamily. Ser/Thr protein kinase family. CDPK subfamily.

The protein resides in the membrane. It catalyses the reaction L-seryl-[protein] + ATP = O-phospho-L-seryl-[protein] + ADP + H(+). The enzyme catalyses L-threonyl-[protein] + ATP = O-phospho-L-threonyl-[protein] + ADP + H(+). Its activity is regulated as follows. Activated by calcium. Autophosphorylation may play an important role in the regulation of the kinase activity. May play a role in signal transduction pathways that involve calcium as a second messenger. The polypeptide is Calcium-dependent protein kinase 18 (CPK18) (Arabidopsis thaliana (Mouse-ear cress)).